The primary structure comprises 559 residues: Formate--tetrahydrofolate ligase (559 aa).

68–75 (TPAGEGKT) contacts ATP.

This sequence belongs to the formate--tetrahydrofolate ligase family.

The catalysed reaction is (6S)-5,6,7,8-tetrahydrofolate + formate + ATP = (6R)-10-formyltetrahydrofolate + ADP + phosphate. It functions in the pathway one-carbon metabolism; tetrahydrofolate interconversion. The sequence is that of Formate--tetrahydrofolate ligase from Rhizobium meliloti (strain 1021) (Ensifer meliloti).